Reading from the N-terminus, the 247-residue chain is Small ribosomal subunit protein uS2 (247 aa).

The protein belongs to the universal ribosomal protein uS2 family.

This Ectopseudomonas mendocina (strain ymp) (Pseudomonas mendocina) protein is Small ribosomal subunit protein uS2.